A 131-amino-acid polypeptide reads, in one-letter code: Small ribosomal subunit protein uS11 (131 aa).

The protein belongs to the universal ribosomal protein uS11 family. In terms of assembly, part of the 30S ribosomal subunit. Interacts with proteins S7 and S18. Binds to IF-3.

In terms of biological role, located on the platform of the 30S subunit, it bridges several disparate RNA helices of the 16S rRNA. Forms part of the Shine-Dalgarno cleft in the 70S ribosome. In Geobacter sulfurreducens (strain ATCC 51573 / DSM 12127 / PCA), this protein is Small ribosomal subunit protein uS11.